The following is a 164-amino-acid chain: MEMTNAQRLILSNQYKMMTMLDPTNAERYRRLQTIIERGYGLQMRELDREFGELTEETCRTIIDIMEMYHALHVSWANLKDTQAIDERRVTFLGFDAATEARYLGYVRFMVNIEGRYTHFDAGTHGFNAQTPMWEKYQRMLNVWHACPRQYHLSANEINQIINA.

It belongs to the UPF0304 family.

The polypeptide is UPF0304 protein YfbU (Salmonella choleraesuis (strain SC-B67)).